A 740-amino-acid polypeptide reads, in one-letter code: Polyribonucleotide nucleotidyltransferase (740 aa).

The Mg(2+) site is built by Asp514 and Asp520. A KH domain is found at 580–639 (PRIITVKIPVDKIGEVIGPKRQMINQIQEDTGAEITIEDDGTIYIGAADGPAAEAARATI). The 73-residue stretch at 651–723 (GERILGSVVK…SRGKLSLIPV (73 aa)) folds into the S1 motif domain.

This sequence belongs to the polyribonucleotide nucleotidyltransferase family. In terms of assembly, homotrimer. It depends on Mg(2+) as a cofactor.

It is found in the cytoplasm. It catalyses the reaction RNA(n+1) + phosphate = RNA(n) + a ribonucleoside 5'-diphosphate. Involved in mRNA degradation. Catalyzes the phosphorolysis of single-stranded polyribonucleotides processively in the 3'- to 5'-direction. In Streptomyces antibioticus, this protein is Polyribonucleotide nucleotidyltransferase.